The primary structure comprises 405 residues: Argininosuccinate synthase (405 aa).

ATP is bound by residues 12–20 (AYSGGLDTS) and alanine 40. Residues tyrosine 92 and serine 97 each contribute to the L-citrulline site. Residue glycine 122 coordinates ATP. L-aspartate is bound by residues threonine 124, asparagine 128, and aspartate 129. Asparagine 128 contributes to the L-citrulline binding site. Residues arginine 132, serine 181, serine 190, glutamate 266, and tyrosine 278 each coordinate L-citrulline.

Belongs to the argininosuccinate synthase family. Type 1 subfamily. As to quaternary structure, homotetramer.

The protein localises to the cytoplasm. The catalysed reaction is L-citrulline + L-aspartate + ATP = 2-(N(omega)-L-arginino)succinate + AMP + diphosphate + H(+). It participates in amino-acid biosynthesis; L-arginine biosynthesis; L-arginine from L-ornithine and carbamoyl phosphate: step 2/3. In Edwardsiella ictaluri (strain 93-146), this protein is Argininosuccinate synthase.